Reading from the N-terminus, the 413-residue chain is Phosphatidylcholine:ceramide cholinephosphotransferase 1 (413 aa).

Residues 7 to 70 enclose the SAM domain; it reads WSPKKVADWL…LDMIETLKME (64 aa). Ser-8 is subject to Phosphoserine. 5 helical membrane-spanning segments follow: residues 136–156, 184–204, 215–235, 276–296, and 304–324; these read FLAFLYALSCFVLTTVMISVV, FSICEINGMILVGLWLIQWLL, FFCIVGTLYLYRCITMYVTTL, MCGDYLYSGHTVMLTLTYLFI, and LWWYHWICWLLSVVGIFCILL. The active site involves His-285. Residues 325-413 lie on the Cytoplasmic side of the membrane; that stretch reads AHDHYTVDVV…VKYSRLVNDT (89 aa). Residues His-328 and Asp-332 contribute to the active site.

It belongs to the sphingomyelin synthase family. As to expression, brain, heart, kidney, liver, muscle and stomach.

Its subcellular location is the golgi apparatus membrane. The enzyme catalyses an N-acylsphing-4-enine + a 1,2-diacyl-sn-glycero-3-phosphocholine = a sphingomyelin + a 1,2-diacyl-sn-glycerol. It catalyses the reaction an N-acylsphinganine + a 1,2-diacyl-sn-glycero-3-phosphocholine = an N-acylsphinganine-1-phosphocholine + a 1,2-diacyl-sn-glycerol. The catalysed reaction is an N-acyl-(4R)-4-hydroxysphinganine + a 1,2-diacyl-sn-glycero-3-phosphocholine = an N-acyl-(4R)-4-hydroxysphinganine-phosphocholine + a 1,2-diacyl-sn-glycerol. It carries out the reaction 1-(9Z-octadecenoyl)-2-acyl-sn-3-glycerol + a sphingomyelin = a 1-(9Z-octadecenoyl)-2-acyl-sn-glycero-3-phosphocholine + an N-acylsphing-4-enine. The enzyme catalyses N-hexadecanoylsphinganine + a 1,2-diacyl-sn-glycero-3-phosphocholine = N-hexadecanoyl-sphinganine-1-phosphocholine + a 1,2-diacyl-sn-glycerol. It catalyses the reaction N-hexadecanoyl-(4R)-hydroxysphinganine + a 1,2-diacyl-sn-glycero-3-phosphocholine = N-hexadecanoyl-(4R)-hydroxysphinganine-phosphocholine + a 1,2-diacyl-sn-glycerol. The catalysed reaction is an N-acylsphing-4-enine + a 1,2-diacyl-sn-glycero-3-phosphoethanolamine = an N-acylsphing-4-enine 1-phosphoethanolamine + a 1,2-diacyl-sn-glycerol. It functions in the pathway sphingolipid metabolism. With respect to regulation, inhibited by bacterial PC-phospholipase C inhibitor D609. Major sphingomyelin synthase at the Golgi apparatus. Catalyzes the reversible transfer of phosphocholine moiety in sphingomyelin biosynthesis: in the forward reaction transfers phosphocholine head group of phosphatidylcholine (PC) on to ceramide (CER) to form ceramide phosphocholine (sphingomyelin, SM) and diacylglycerol (DAG) as by-product, and in the reverse reaction transfers phosphocholine from SM to DAG to form PC and CER. The direction of the reaction depends on the levels of CER and DAG in Golgi membranes. Converts the newly synthesized CER, that is transported from the endoplasmic reticulum to the trans-Golgi by the Cer transport protein (CERT), to SM. Can form a heteromeric complex with glucosylceramide synthase (GCS) increasing SMS activity and reducing glucosylceramide synthesis, a critical mechanism that controls the metabolic fate of CER in the Golgi. Does not use free phosphorylcholine or CDP-choline as donor. Can also transfer phosphoethanolamine head group of phosphatidylethanolamine (PE) on to CER to form ceramide phosphoethanolamine (CPE). Regulates receptor-mediated signal transduction via mitogenic DAG and proapoptotic CER, as well as via SM, a structural component of membrane rafts that serve as platforms for signal transduction and protein sorting. Plays a role in secretory transport via regulation of DAG pool at the Golgi apparatus and its downstream effects on PRKD1. The chain is Phosphatidylcholine:ceramide cholinephosphotransferase 1 (SGMS1) from Homo sapiens (Human).